The following is a 334-amino-acid chain: Phosphate acyltransferase (334 aa).

This sequence belongs to the PlsX family. Homodimer. Probably interacts with PlsY.

The protein localises to the cytoplasm. It catalyses the reaction a fatty acyl-[ACP] + phosphate = an acyl phosphate + holo-[ACP]. The protein operates within lipid metabolism; phospholipid metabolism. In terms of biological role, catalyzes the reversible formation of acyl-phosphate (acyl-PO(4)) from acyl-[acyl-carrier-protein] (acyl-ACP). This enzyme utilizes acyl-ACP as fatty acyl donor, but not acyl-CoA. This is Phosphate acyltransferase from Caldicellulosiruptor bescii (strain ATCC BAA-1888 / DSM 6725 / KCTC 15123 / Z-1320) (Anaerocellum thermophilum).